A 359-amino-acid chain; its full sequence is Norspermidine sensor (359 aa).

The signal sequence occupies residues 1-33 (MTNFCNEWVSYSQMIKRFLSLMVLNTVCYQASA).

The protein belongs to the bacterial solute-binding protein PotD/PotF family.

It is found in the periplasm. Functionally, acts as a sensor of norspermidine and enhances biofilm formation. When complexed to norspermidine, could interact with the periplasmic portion of MbaA to regulate its enzymatic activity. This Vibrio cholerae serotype O1 (strain ATCC 39315 / El Tor Inaba N16961) protein is Norspermidine sensor (nspS).